The chain runs to 227 residues: MITNAISKIIKYDFKNTQLLNEALTHPSVLSKDNNNFNYERLEFLGDAVLNLVISEMLFNIFPYDTEGNLAKKKTALVCGTKLVEIAQSINLGIFIIMSDGERSCGGANNSNNLENALEALIGAIYLDGGLKAAKDFIFLFWKNSATHMKVPPQDAKTILQEWAQSKGFPAPSYHIINKSGPDHNPCFTVEVRINSHETLHATGHNKKLAEQKAASLMLAKINYKIK.

Residues 3–130 (TNAISKIIKY…LIGAIYLDGG (128 aa)) form the RNase III domain. Glu43 contacts Mg(2+). The active site involves Asp47. The Mg(2+) site is built by Asn116 and Glu119. Glu119 is an active-site residue. The region spanning 155-224 (DAKTILQEWA…ASLMLAKINY (70 aa)) is the DRBM domain.

This sequence belongs to the ribonuclease III family. In terms of assembly, homodimer. It depends on Mg(2+) as a cofactor.

The protein localises to the cytoplasm. The enzyme catalyses Endonucleolytic cleavage to 5'-phosphomonoester.. Digests double-stranded RNA. Involved in the processing of primary rRNA transcript to yield the immediate precursors to the large and small rRNAs (23S and 16S). Processes some mRNAs, and tRNAs when they are encoded in the rRNA operon. Processes pre-crRNA and tracrRNA of type II CRISPR loci if present in the organism. This chain is Ribonuclease 3, found in Ehrlichia ruminantium (strain Welgevonden).